Reading from the N-terminus, the 101-residue chain is Threonine-rich inner membrane protein GfcA (101 aa).

An N-terminal signal peptide occupies residues methionine 1 to alanine 21. The Cytoplasmic segment spans residues alanine 22–alanine 59. The interval glutamate 24–alanine 45 is disordered. Residues valine 60–valine 80 form a helical membrane-spanning segment. The Periplasmic segment spans residues alanine 81–arginine 101. The interval alanine 82–arginine 101 is disordered.

Its subcellular location is the cell inner membrane. The polypeptide is Threonine-rich inner membrane protein GfcA (gfcA) (Escherichia coli (strain K12)).